The following is a 407-amino-acid chain: Elongation factor Tu, chloroplastic (407 aa).

Residues 10–212 (KPHVNIGTIG…SVDNYIPAPE (203 aa)) enclose the tr-type G domain. The segment at 19–26 (GHVDHGKT) is G1. 19-26 (GHVDHGKT) lines the GTP pocket. Thr26 is a Mg(2+) binding site. Positions 59-63 (GITIN) are G2. The G3 stretch occupies residues 80 to 83 (DCPG). GTP contacts are provided by residues 80–84 (DCPGH) and 135–138 (NKAD). The interval 135-138 (NKAD) is G4. Residues 173 to 175 (SAL) form a G5 region.

Belongs to the TRAFAC class translation factor GTPase superfamily. Classic translation factor GTPase family. EF-Tu/EF-1A subfamily.

It localises to the plastid. Its subcellular location is the chloroplast. The catalysed reaction is GTP + H2O = GDP + phosphate + H(+). Functionally, GTP hydrolase that promotes the GTP-dependent binding of aminoacyl-tRNA to the A-site of ribosomes during protein biosynthesis. The polypeptide is Elongation factor Tu, chloroplastic (tufA) (Emiliania huxleyi (Coccolithophore)).